A 415-amino-acid polypeptide reads, in one-letter code: Serine hydroxymethyltransferase (415 aa).

(6S)-5,6,7,8-tetrahydrofolate is bound by residues L122 and 126-128 (GHL). Position 230 is an N6-(pyridoxal phosphate)lysine (K230).

This sequence belongs to the SHMT family. As to quaternary structure, homodimer. Pyridoxal 5'-phosphate is required as a cofactor.

The protein resides in the cytoplasm. The catalysed reaction is (6R)-5,10-methylene-5,6,7,8-tetrahydrofolate + glycine + H2O = (6S)-5,6,7,8-tetrahydrofolate + L-serine. It participates in one-carbon metabolism; tetrahydrofolate interconversion. It functions in the pathway amino-acid biosynthesis; glycine biosynthesis; glycine from L-serine: step 1/1. Catalyzes the reversible interconversion of serine and glycine with tetrahydrofolate (THF) serving as the one-carbon carrier. This reaction serves as the major source of one-carbon groups required for the biosynthesis of purines, thymidylate, methionine, and other important biomolecules. Also exhibits THF-independent aldolase activity toward beta-hydroxyamino acids, producing glycine and aldehydes, via a retro-aldol mechanism. The polypeptide is Serine hydroxymethyltransferase (Cupriavidus necator (strain ATCC 17699 / DSM 428 / KCTC 22496 / NCIMB 10442 / H16 / Stanier 337) (Ralstonia eutropha)).